The primary structure comprises 116 residues: Protein cop (116 aa).

Putative control of replication message. In Staphylococcus aureus, this protein is Protein cop (cop).